The sequence spans 798 residues: Protocadherin beta-14 (798 aa).

An N-terminal signal peptide occupies residues 1 to 26; that stretch reads MEIRGALDLRKRQVLIFLVLLGLSRA. Residues 27–686 lie on the Extracellular side of the membrane; sequence GTESAHYSVA…APAQAQADSL (660 aa). 5 Cadherin domains span residues 35 to 133, 138 to 242, 247 to 347, 352 to 451, and 456 to 561; these read VAEE…SPTF, ILIK…APEF, YEVQ…PPEV, ITKR…APAF, and YTLF…SPFV. A disulfide bond links Cys96 and Cys102. Asn169 carries N-linked (GlcNAc...) asparagine glycosylation. 3 N-linked (GlcNAc...) asparagine glycosylation sites follow: Asn359, Asn418, and Asn436. Residue Asn567 is glycosylated (N-linked (GlcNAc...) asparagine). The region spanning 568-671 is the Cadherin 6 domain; that stretch reads GSAPCTELVP…LVDGFSQPYL (104 aa). A helical transmembrane segment spans residues 687-711; that stretch reads TVYLVVALASVSSLFLFSVLLFVAV. Residues 712-798 lie on the Cytoplasmic side of the membrane; it reads RLCRRSRAAS…FRNSFGLNIQ (87 aa).

It is found in the cell membrane. Functionally, potential calcium-dependent cell-adhesion protein. May be involved in the establishment and maintenance of specific neuronal connections in the brain. The sequence is that of Protocadherin beta-14 (PCDHB14) from Pan troglodytes (Chimpanzee).